The primary structure comprises 92 residues: MGLKEEFEEHAEKVNTLTELPSNEDLLILYGLYKQAKFGPVDTSRPGMFSMKERAKWDAWKAVEGKSSEEAMNDYITKVKQLLEVAASKAST.

The ACB domain occupies 3–88; it reads LKEEFEEHAE…VKQLLEVAAS (86 aa). Residues 30-34, lysine 52, lysine 56, and tyrosine 75 each bind an acyl-CoA; that span reads YGLYK.

It belongs to the ACBP family. As to quaternary structure, interacts with PDLP8. Mostly expressed in seeds, stems, and siliques, and, to a lower extent, in leaves, flowers, and roots (at protein level). Highly expressed in root and shoot phloem companion cells.

Its subcellular location is the cytoplasm. The protein localises to the cell membrane. Its function is as follows. Binds medium- and long-chain acyl-CoA esters with very high affinity. May function as an intracellular carrier of acyl-CoA esters. Confers resistance to cold and freezing. Interacts with phosphatidylcholine and derivatives, but not phosphatidic acid and lysophosphatidylcholine. May be involved in phospholipid metabolism. This chain is Acyl-CoA-binding domain-containing protein 6 (ACBP6), found in Arabidopsis thaliana (Mouse-ear cress).